Here is a 326-residue protein sequence, read N- to C-terminus: Probable pectate lyase B (326 aa).

The signal sequence occupies residues methionine 1 to alanine 15. Aspartate 133, aspartate 162, and aspartate 166 together coordinate Ca(2+). Residue arginine 219 is part of the active site.

This sequence belongs to the polysaccharide lyase 1 family. The cofactor is Ca(2+).

It is found in the secreted. The enzyme catalyses Eliminative cleavage of (1-&gt;4)-alpha-D-galacturonan to give oligosaccharides with 4-deoxy-alpha-D-galact-4-enuronosyl groups at their non-reducing ends.. Its function is as follows. Pectinolytic enzyme consist of four classes of enzymes: pectin lyase, polygalacturonase, pectin methylesterase and rhamnogalacturonase. Among pectinolytic enzymes, pectin lyase is the most important in depolymerization of pectin, since it cleaves internal glycosidic bonds of highly methylated pectins. Favors pectate, the anion, over pectin, the methyl ester. The polypeptide is Probable pectate lyase B (plyB) (Aspergillus flavus (strain ATCC 200026 / FGSC A1120 / IAM 13836 / NRRL 3357 / JCM 12722 / SRRC 167)).